The sequence spans 380 residues: Glucose-1-phosphate adenylyltransferase (380 aa).

Residues G164, 179-180 (EK), and S190 each bind alpha-D-glucose 1-phosphate.

This sequence belongs to the bacterial/plant glucose-1-phosphate adenylyltransferase family. Homotetramer.

The enzyme catalyses alpha-D-glucose 1-phosphate + ATP + H(+) = ADP-alpha-D-glucose + diphosphate. It functions in the pathway glycan biosynthesis; glycogen biosynthesis. Its function is as follows. Involved in the biosynthesis of ADP-glucose, a building block required for the elongation reactions to produce glycogen. Catalyzes the reaction between ATP and alpha-D-glucose 1-phosphate (G1P) to produce pyrophosphate and ADP-Glc. This chain is Glucose-1-phosphate adenylyltransferase, found in Ligilactobacillus salivarius (strain UCC118) (Lactobacillus salivarius).